The sequence spans 504 residues: Taurochenodeoxycholic 6 alpha-hydroxylase (504 aa).

Helical transmembrane passes span 6-26 (LASV…LLLL) and 110-130 (APVL…LLNG). Cys451 is a binding site for heme.

This sequence belongs to the cytochrome P450 family. It depends on heme as a cofactor. In terms of tissue distribution, primarily expressed in liver. Low expression in kidney.

It localises to the endoplasmic reticulum membrane. The catalysed reaction is taurochenodeoxycholate + reduced [NADPH--hemoprotein reductase] + O2 = taurohyocholate + oxidized [NADPH--hemoprotein reductase] + H2O + H(+). The enzyme catalyses lithocholate + reduced [NADPH--hemoprotein reductase] + O2 = hyodeoxycholate + oxidized [NADPH--hemoprotein reductase] + H2O + H(+). In terms of biological role, catalyzes the 6 alpha hydroxylation oxidation of taurodeoxycholate to produce the pig specific bile acid taurohyocholic acid. This is Taurochenodeoxycholic 6 alpha-hydroxylase (CYP4A21) from Sus scrofa (Pig).